The sequence spans 823 residues: Valine--tRNA ligase (823 aa).

A 'HIGH' region motif is present at residues 52 to 62 (PTVSGVLHMGH). The 'KMSKS' region motif lies at 549–553 (KMSKS). K552 contributes to the ATP binding site.

It belongs to the class-I aminoacyl-tRNA synthetase family. ValS type 2 subfamily. In terms of assembly, monomer.

It localises to the cytoplasm. The catalysed reaction is tRNA(Val) + L-valine + ATP = L-valyl-tRNA(Val) + AMP + diphosphate. Functionally, catalyzes the attachment of valine to tRNA(Val). As ValRS can inadvertently accommodate and process structurally similar amino acids such as threonine, to avoid such errors, it has a 'posttransfer' editing activity that hydrolyzes mischarged Thr-tRNA(Val) in a tRNA-dependent manner. The protein is Valine--tRNA ligase of Anaplasma marginale (strain St. Maries).